The following is a 131-amino-acid chain: MAASLPHPKIVKKHTKKFKRHHSDRYHRVSENWRKQKGIDSVVRRRFRGNISEPTIGYGSNKKTKFMSPSGHKVVLVSNLKDLETLTMHTKSYAAEIAHNVSSKNRVTLLARAKALGVKVTNAKGRLALEA.

The protein belongs to the eukaryotic ribosomal protein eL32 family.

This Candida glabrata (strain ATCC 2001 / BCRC 20586 / JCM 3761 / NBRC 0622 / NRRL Y-65 / CBS 138) (Yeast) protein is Large ribosomal subunit protein eL32 (RPL32).